The following is a 1200-amino-acid chain: Nuclear pore complex protein Nup133 (1200 aa).

Residues 1 to 28 form a disordered region; that stretch reads MERNLQKQLYGISRESSPGARRYSMPAA.

It belongs to the nucleoporin Nup133 family. Forms part of the Nup107-Nup160 subcomplex in the nuclear pore.

The protein localises to the nucleus. It localises to the nuclear pore complex. Probable component of the nuclear pore complex (NPC). Plays a role in NPC assembly and/or maintenance. This is Nuclear pore complex protein Nup133 from Drosophila melanogaster (Fruit fly).